The primary structure comprises 285 residues: Putative cuticle collagen 75 (285 aa).

Triple-helical region stretches follow at residues 87 to 116 (GRIG…PGEL) and 133 to 261 (GPKG…PGLD). Residues 207-231 (PGAPGIPGEEGLSGPTGQPGSPGSI) are compositionally biased toward low complexity. A disordered region spans residues 207–257 (PGAPGIPGEEGLSGPTGQPGSPGSIGAMGYEGAYGDRGEPGPPGPIGRRGG).

The protein belongs to the cuticular collagen family. In terms of assembly, collagen polypeptide chains are complexed within the cuticle by disulfide bonds and other types of covalent cross-links.

Its function is as follows. Nematode cuticles are composed largely of collagen-like proteins. The cuticle functions both as an exoskeleton and as a barrier to protect the worm from its environment. The chain is Putative cuticle collagen 75 (col-75) from Caenorhabditis elegans.